The chain runs to 105 residues: Heat shock protein HspQ (105 aa).

The tract at residues 75–105 (GEAQEAHPEQPSLDELAESIRHQLQAPRLRN) is disordered.

Belongs to the HspQ family.

It is found in the cytoplasm. Its function is as follows. Involved in the degradation of certain denaturated proteins, including DnaA, during heat shock stress. This is Heat shock protein HspQ from Serratia proteamaculans (strain 568).